The primary structure comprises 360 residues: MKILAVDTKRGLVRVVPETTDDIWLLSTVIQPGDLVRAKTLREIHFGDRGSGRSSRIPMVLTVRVEAVEFQAFTTRLRIRGIVIEGPEKYGVVGKYHTLSIEPGRELDIVKPSGWPQVLIEKLKRGSYNVAAVVVAVDYDDYAVAVVRGQGVKILASGGLHLPGKDDPTREDKLREAVTVIAKTTADVARRENALLVVAAGPGTVKNLVAEKLRGLVQGVKILVDNVSMGGEAGVFEEVRRGIMRQALQDAAVVEAERILEEFERRLAKEPGRIAYTLEQVYRAAEMGAVEELLILDETLHHPDPEVRARVDELLRLADATRAKIHFVSVESPVGYKVKALGGVIALLRYAINFAGETGG.

It belongs to the eukaryotic release factor 1 family. Pelota subfamily. As to quaternary structure, monomer. The cofactor is a divalent metal cation.

It localises to the cytoplasm. In terms of biological role, may function in recognizing stalled ribosomes, interact with stem-loop structures in stalled mRNA molecules, and effect endonucleolytic cleavage of the mRNA. May play a role in the release non-functional ribosomes and degradation of damaged mRNAs. Has endoribonuclease activity. The chain is Protein pelota homolog from Hyperthermus butylicus (strain DSM 5456 / JCM 9403 / PLM1-5).